The primary structure comprises 335 residues: Ribosomal RNA large subunit methyltransferase F (335 aa).

This sequence belongs to the methyltransferase superfamily. METTL16/RlmF family.

It localises to the cytoplasm. It carries out the reaction adenosine(1618) in 23S rRNA + S-adenosyl-L-methionine = N(6)-methyladenosine(1618) in 23S rRNA + S-adenosyl-L-homocysteine + H(+). Specifically methylates the adenine in position 1618 of 23S rRNA. The protein is Ribosomal RNA large subunit methyltransferase F of Yersinia enterocolitica serotype O:8 / biotype 1B (strain NCTC 13174 / 8081).